Reading from the N-terminus, the 293-residue chain is Formamidopyrimidine-DNA glycosylase (293 aa).

Catalysis depends on proline 2, which acts as the Schiff-base intermediate with DNA. Glutamate 3 (proton donor) is an active-site residue. Catalysis depends on lysine 58, which acts as the Proton donor; for beta-elimination activity. DNA is bound by residues histidine 104, arginine 123, and lysine 166. The FPG-type zinc finger occupies 257-293 (QVYDREGEPCRTDGCGGVVKRFVQNGRSTFWCPKCQR). The Proton donor; for delta-elimination activity role is filled by arginine 283.

The protein belongs to the FPG family. In terms of assembly, monomer. It depends on Zn(2+) as a cofactor.

It carries out the reaction Hydrolysis of DNA containing ring-opened 7-methylguanine residues, releasing 2,6-diamino-4-hydroxy-5-(N-methyl)formamidopyrimidine.. It catalyses the reaction 2'-deoxyribonucleotide-(2'-deoxyribose 5'-phosphate)-2'-deoxyribonucleotide-DNA = a 3'-end 2'-deoxyribonucleotide-(2,3-dehydro-2,3-deoxyribose 5'-phosphate)-DNA + a 5'-end 5'-phospho-2'-deoxyribonucleoside-DNA + H(+). Involved in base excision repair of DNA damaged by oxidation or by mutagenic agents. Acts as a DNA glycosylase that recognizes and removes damaged bases. Has a preference for oxidized purines, such as 7,8-dihydro-8-oxoguanine (8-oxoG). Has AP (apurinic/apyrimidinic) lyase activity and introduces nicks in the DNA strand. Cleaves the DNA backbone by beta-delta elimination to generate a single-strand break at the site of the removed base with both 3'- and 5'-phosphates. The polypeptide is Formamidopyrimidine-DNA glycosylase (Bradyrhizobium sp. (strain BTAi1 / ATCC BAA-1182)).